A 392-amino-acid polypeptide reads, in one-letter code: PMA1 stabilization in the Golgi protein 1 (392 aa).

The signal sequence occupies residues 1–22 (MRFHDSILIFFSLASLYQHVHG). O-linked (Man) threonine glycosylation is found at Thr-34 and Thr-35. O-linked (Man) serine glycosylation is present at Ser-36. Residue Thr-45 is glycosylated (O-linked (Man) threonine). Ser-49 is a glycosylation site (O-linked (Man) serine). Residues Thr-55, Thr-57, and Thr-63 are each glycosylated (O-linked (Man) threonine). Ser-65 is a glycosylation site (O-linked (Man) serine). O-linked (Man) threonine glycosylation is present at Thr-71. O-linked (Man) serine glycosylation is present at Ser-80. Residues Thr-89 and Thr-99 are each glycosylated (O-linked (Man) threonine). Ser-107 carries an O-linked (Man) serine glycan. O-linked (Man) threonine glycosylation is found at Thr-108 and Thr-112. O-linked (Man) serine glycosylation is found at Ser-114 and Ser-115. Thr-117 carries an O-linked (Man) threonine glycan. Ser-119 and Ser-148 each carry an O-linked (Man) serine glycan. Thr-156 carries O-linked (Man) threonine glycosylation. Residue Ser-171 is glycosylated (O-linked (Man) serine). Thr-176 is a glycosylation site (O-linked (Man) threonine). Residue Ser-181 is glycosylated (O-linked (Man) serine). Residues Thr-188, Thr-192, Thr-195, and Thr-199 are each glycosylated (O-linked (Man) threonine). 2 O-linked (Man) serine glycosylation sites follow: Ser-203 and Ser-215. Topologically, residues 230-317 (DIPATFFSSE…DAGITNDQWY (88 aa)) are lumenal. A helical transmembrane segment spans residues 318–338 (YVALSIPTVVVVFFVFMYFFL). The Cytoplasmic portion of the chain corresponds to 339-392 (YVNGKNRDFTDVTRKALNKKRRVLGKFSEMKKFKNMKNHKYTELPSYKKTSKQN).

Interacts with EXP1. PSG1-N' interacts with ERAD-related proteins involved in PMA1 quality control including EPS1, CDC48, UBX2 and SSM4. PSG1-C' interacts with the TLG1/2 SNARE complex proteins TLG1, TLG2 and VTI1. Post-translationally, the precursor protein is cleaved into two polypeptide chains, PSG1-N' and PSG1-C'. The cleavage is performed in the Golgi apparatus by Ca(+)-dependent serine protease KEX2 between Arg-229 and Asp-230. In terms of processing, PSG1-N' is highly O-mannosylated.

The protein localises to the golgi apparatus lumen. The protein resides in the cytoplasmic vesicle. Its subcellular location is the COPI-coated vesicle membrane. With EXP1, the specific cargo receptor protein for the plasma membrane ATPase PMA1, is involved in the transport and/or maturation of PMA1. EXP1 and PSG1 probably act sequentially to promote PMA1 sorting between the ER and the Golgi, with EXP1 promoting PMA1 export from the ER to the Golgi while PSG1 has a role in PMA1 maturation or quality control in the Golgi. PSG1 might also couple PMA1 sorting and maturation in the early secretory pathway with the glycosylation machinery. Its function is as follows. PSG1 is cleaved by KEX2 in two stable peptides, PSG1-N' and PSG1-C', the former supporting a role in maturation quality control, the latter having a role in modulating vesicular trafficking. In Saccharomyces cerevisiae (strain ATCC 204508 / S288c) (Baker's yeast), this protein is PMA1 stabilization in the Golgi protein 1.